A 407-amino-acid chain; its full sequence is UPF0597 protein NAMH_0191 (407 aa).

It belongs to the UPF0597 family.

The polypeptide is UPF0597 protein NAMH_0191 (Nautilia profundicola (strain ATCC BAA-1463 / DSM 18972 / AmH)).